A 489-amino-acid chain; its full sequence is Protein LMBR1L (489 aa).

At 1 to 21 the chain is on the extracellular side; it reads MEAADYEVLSVREQLFHDRVR. The segment at 1–59 is interaction with LGB; sequence MEAADYEVLSVREQLFHDRVRECIISILLFATLYILCHIFLTRFKKPAEFTTVDDEDAT. Residues 1–76 are LCN1-binding; the sequence is MEAADYEVLS…LCTFTLAVAL (76 aa). A helical transmembrane segment spans residues 22–42; it reads ECIISILLFATLYILCHIFLT. Residues 43–66 lie on the Cytoplasmic side of the membrane; it reads RFKKPAEFTTVDDEDATVNKIALE. The helical transmembrane segment at 67–87 threads the bilayer; that stretch reads LCTFTLAVALGAVLLLPFSII. Residues 88–114 are Extracellular-facing; that stretch reads SNEVLLSLPRNYYIQWLNGSLIHGLWN. A helical transmembrane segment spans residues 115–135; the sequence is LVFLFSNLSLVFLMPFAYFFT. At 136 to 154 the chain is on the cytoplasmic side; the sequence is ESEGFAGSRKGVLGRVYET. A helical transmembrane segment spans residues 155–175; the sequence is VVMLILLTLLVLGMVWVASAI. At 176–196 the chain is on the extracellular side; that stretch reads VDNDKASRESLYDFWEYYLPY. The chain crosses the membrane as a helical span at residues 197 to 217; it reads LYSCISFLGVLLLLVCTPLGL. Over 218–305 the chain is Cytoplasmic; that stretch reads ARMFSVTGKL…NLGYPLAMLC (88 aa). Residues 306-326 form a helical membrane-spanning segment; the sequence is LLVLTGLSVLIVAVHILELLI. The Extracellular portion of the chain corresponds to 327-350; that stretch reads DEAAMPRGMQDAALGQASFSKLGS. Residues 351–371 traverse the membrane as a helical segment; sequence FGAIIQVVLIFYLMVSSVVGF. The Cytoplasmic portion of the chain corresponds to 372–388; the sequence is YSSPLFGSLRPRWHDTS. Residues 389–409 traverse the membrane as a helical segment; the sequence is MTQIIGNCVCLLVLSSALPVF. The Extracellular portion of the chain corresponds to 410-431; the sequence is SRTLGLTRFDLLGDFGRFNWLG. The helical transmembrane segment at 432–452 threads the bilayer; it reads NFYIVFLYNAAFAGLTTLCLV. Topologically, residues 453 to 489 are cytoplasmic; it reads KTFTAAVRAELIRAFGLDRLPLPVSGFPRASRKKQHQ.

The protein belongs to the LIMR family. In terms of assembly, dimer. Can also form higher oligomers. Interacts with LCN1; this interaction mediates the endocytosis of LCN1. Interacts with UBAC2, FAF2, VCP, AMFR, ZNRF3, CTNNB1, LRP6, GSK3B, FZD6, DVL2 and RNF43. Interacts with GSK3A. Interaction with LGB and SCGB1A1 is controversial. In terms of tissue distribution, highly expressed in the bone marrow, thymus, spleen and lymphocytes.

It localises to the cell membrane. It is found in the endoplasmic reticulum membrane. Its function is as follows. Plays an essential role in lymphocyte development by negatively regulating the canonical Wnt signaling pathway. In association with UBAC2 and E3 ubiquitin-protein ligase AMFR, promotes the ubiquitin-mediated degradation of CTNNB1 and Wnt receptors FZD6 and LRP6. LMBR1L stabilizes the beta-catenin destruction complex that is required for regulating CTNNB1 levels. Acts as a LCN1 receptor and can mediate its endocytosis. The sequence is that of Protein LMBR1L (Lmbr1l) from Mus musculus (Mouse).